Reading from the N-terminus, the 339-residue chain is Transmembrane protein 120B (339 aa).

The stretch at Met1 to Gln77 forms a coiled coil. The next 6 helical transmembrane spans lie at Gly102 to Ala124, Phe132 to His152, Val159 to Ile179, Gly187 to Pro207, Phe270 to Phe290, and Gln302 to Leu322.

The protein belongs to the TMEM120 family. Heterooligomer with TMEM120A.

The protein localises to the nucleus inner membrane. Its function is as follows. Necessary for efficient adipogenesis. Does not show ion channel activity. The sequence is that of Transmembrane protein 120B from Homo sapiens (Human).